The primary structure comprises 257 residues: Thiazole synthase (257 aa).

Lys-98 (schiff-base intermediate with DXP) is an active-site residue. Residues Gly-159, 185–186 (AG), and 207–208 (NT) contribute to the 1-deoxy-D-xylulose 5-phosphate site.

The protein belongs to the ThiG family. In terms of assembly, homotetramer. Forms heterodimers with either ThiH or ThiS.

The protein resides in the cytoplasm. The catalysed reaction is [ThiS sulfur-carrier protein]-C-terminal-Gly-aminoethanethioate + 2-iminoacetate + 1-deoxy-D-xylulose 5-phosphate = [ThiS sulfur-carrier protein]-C-terminal Gly-Gly + 2-[(2R,5Z)-2-carboxy-4-methylthiazol-5(2H)-ylidene]ethyl phosphate + 2 H2O + H(+). It functions in the pathway cofactor biosynthesis; thiamine diphosphate biosynthesis. Catalyzes the rearrangement of 1-deoxy-D-xylulose 5-phosphate (DXP) to produce the thiazole phosphate moiety of thiamine. Sulfur is provided by the thiocarboxylate moiety of the carrier protein ThiS. In vitro, sulfur can be provided by H(2)S. The polypeptide is Thiazole synthase (Anaeromyxobacter dehalogenans (strain 2CP-C)).